Consider the following 372-residue polypeptide: MNSGIDLQGTFIKSLIDLGIPPGTAKAIWMPLPMILMLIGATVGVLVCVWLERKISAAAQQRIGPEYIGPLGLLAPVADGLKLVFKEDIVPAQADPWLFTLGPILVVLPVFLSYLIVPFGQNIVITNVGTGIFLWIALSSIQPIGLLMAGYSSNNKYSLLGGLRAAAQSISYEIPLALSVLAIVMMSNSLSTVDIVNQQSDYGILGWNIWRQPLGFMIFWIAALAECERLPFDLPEAEEELVAGYQTEYSGMKFALFYLSSYVNLILSALLVAVLYLGGWDFPIPINVLANLVGVSEANPVLQVVSAALGITMTLVKAYFLVFIAILLRWTVPRVRIDQLLDLGWKFLLPVGLVNLLLTAALKLAFPVAFGG.

The next 9 helical transmembrane spans lie at 27-47 (AIWMPLPMILMLIGATVGVLV), 65-85 (PEYIGPLGLLAPVADGLKLVF), 97-117 (WLFTLGPILVVLPVFLSYLIV), 128-148 (VGTGIFLWIALSSIQPIGLLM), 166-186 (AAQSISYEIPLALSVLAIVMM), 204-224 (ILGWNIWRQPLGFMIFWIAAL), 266-286 (ILSALLVAVLYLGGWDFPIPI), 308-328 (ALGITMTLVKAYFLVFIAILL), and 347-367 (FLLPVGLVNLLLTAALKLAFP).

This sequence belongs to the complex I subunit 1 family. In terms of assembly, NDH-1 is composed of at least 11 different subunits.

It is found in the cellular thylakoid membrane. It catalyses the reaction a plastoquinone + NADH + (n+1) H(+)(in) = a plastoquinol + NAD(+) + n H(+)(out). It carries out the reaction a plastoquinone + NADPH + (n+1) H(+)(in) = a plastoquinol + NADP(+) + n H(+)(out). In terms of biological role, NDH-1 shuttles electrons from an unknown electron donor, via FMN and iron-sulfur (Fe-S) centers, to quinones in the respiratory and/or the photosynthetic chain. The immediate electron acceptor for the enzyme in this species is believed to be plastoquinone. Couples the redox reaction to proton translocation, and thus conserves the redox energy in a proton gradient. The sequence is that of NAD(P)H-quinone oxidoreductase subunit 1 from Nostoc sp. (strain PCC 7120 / SAG 25.82 / UTEX 2576).